The following is a 783-amino-acid chain: LPS-assembly protein LptD (783 aa).

The N-terminal stretch at 1-24 is a signal peptide; sequence MKKNYYSLISFSIFTALYSTAGFA.

It belongs to the LptD family. In terms of assembly, component of the lipopolysaccharide transport and assembly complex. Interacts with LptE and LptA.

The protein localises to the cell outer membrane. Functionally, together with LptE, is involved in the assembly of lipopolysaccharide (LPS) at the surface of the outer membrane. The polypeptide is LPS-assembly protein LptD (Mannheimia succiniciproducens (strain KCTC 0769BP / MBEL55E)).